A 397-amino-acid chain; its full sequence is Adenylosuccinate synthetase (397 aa).

Residues 11–17 and 39–41 each bind GTP; these read GDEGKGK and GHT. The Proton acceptor role is filled by D12. Mg(2+) is bound by residues D12 and G39. Residues 12–15, 37–40, T125, R139, Q212, T227, and R290 contribute to the IMP site; these read DEGK and NAGH. The Proton donor role is filled by H40. 286–292 is a binding site for substrate; that stretch reads STTGRPR. GTP-binding positions include R292, 318–320, and 386–388; these read KAD and STG.

It belongs to the adenylosuccinate synthetase family. Homodimer. The cofactor is Mg(2+).

Its subcellular location is the cytoplasm. The enzyme catalyses IMP + L-aspartate + GTP = N(6)-(1,2-dicarboxyethyl)-AMP + GDP + phosphate + 2 H(+). It participates in purine metabolism; AMP biosynthesis via de novo pathway; AMP from IMP: step 1/2. Its function is as follows. Plays an important role in the de novo pathway of purine nucleotide biosynthesis. Catalyzes the first committed step in the biosynthesis of AMP from IMP. The chain is Adenylosuccinate synthetase from Thermotoga maritima (strain ATCC 43589 / DSM 3109 / JCM 10099 / NBRC 100826 / MSB8).